The sequence spans 95 residues: Aspartyl/glutamyl-tRNA(Asn/Gln) amidotransferase subunit C (95 aa).

Belongs to the GatC family. As to quaternary structure, heterotrimer of A, B and C subunits.

It catalyses the reaction L-glutamyl-tRNA(Gln) + L-glutamine + ATP + H2O = L-glutaminyl-tRNA(Gln) + L-glutamate + ADP + phosphate + H(+). It carries out the reaction L-aspartyl-tRNA(Asn) + L-glutamine + ATP + H2O = L-asparaginyl-tRNA(Asn) + L-glutamate + ADP + phosphate + 2 H(+). In terms of biological role, allows the formation of correctly charged Asn-tRNA(Asn) or Gln-tRNA(Gln) through the transamidation of misacylated Asp-tRNA(Asn) or Glu-tRNA(Gln) in organisms which lack either or both of asparaginyl-tRNA or glutaminyl-tRNA synthetases. The reaction takes place in the presence of glutamine and ATP through an activated phospho-Asp-tRNA(Asn) or phospho-Glu-tRNA(Gln). This chain is Aspartyl/glutamyl-tRNA(Asn/Gln) amidotransferase subunit C, found in Chlorobium phaeovibrioides (strain DSM 265 / 1930) (Prosthecochloris vibrioformis (strain DSM 265)).